We begin with the raw amino-acid sequence, 207 residues long: MARYTDAVCRLCRREGLKLYLKGERCYTDKCAITKRNFAPGQHGTSRKKLSNYGVQLREKQKAKRFYGVLESQFRKYFDMADKQAGNTGENLLRILETRLDNLVYRLGLASSRAEARQLVVHGHFTVNGGKVDIPSYLVKAGDAVAVSEKSTNSPKFKELKENFKGTVPTWLTVDSEKLEGKVAAMPSREDIDLPISENLIVELYSK.

One can recognise an S4 RNA-binding domain in the interval 98 to 163; sequence TRLDNLVYRL…SPKFKELKEN (66 aa).

The protein belongs to the universal ribosomal protein uS4 family. In terms of assembly, part of the 30S ribosomal subunit. Contacts protein S5. The interaction surface between S4 and S5 is involved in control of translational fidelity.

One of the primary rRNA binding proteins, it binds directly to 16S rRNA where it nucleates assembly of the body of the 30S subunit. In terms of biological role, with S5 and S12 plays an important role in translational accuracy. In Alkaliphilus metalliredigens (strain QYMF), this protein is Small ribosomal subunit protein uS4A.